The primary structure comprises 207 residues: MQVHVVDHPLAAARLTTLRDERTDNAGFRAALRELTLLLIYEATRDAPCEPVPIRTPLAETVGSRLTKPPLLVPVLRAGLGMVDEAHAALPEAHVGFVGVARDEQTHQPVPYLDSLPDDLTDVPVMVLDPMVATGGSMTHTLGLLISRGAADITVLCVVAAPEGIAALQKAAPNVRLFTAAIDEGLNEVAYIVPGLGDAGDRQFGPR.

5-phospho-alpha-D-ribose 1-diphosphate contacts are provided by residues arginine 77, arginine 102, and 129–137 (DPMVATGGS). Residues isoleucine 192 and 197–199 (GDA) each bind uracil. Residue aspartate 198 coordinates 5-phospho-alpha-D-ribose 1-diphosphate.

This sequence belongs to the UPRTase family. The cofactor is Mg(2+).

The enzyme catalyses UMP + diphosphate = 5-phospho-alpha-D-ribose 1-diphosphate + uracil. Its pathway is pyrimidine metabolism; UMP biosynthesis via salvage pathway; UMP from uracil: step 1/1. Its activity is regulated as follows. Allosterically activated by GTP. Functionally, catalyzes the conversion of uracil and 5-phospho-alpha-D-ribose 1-diphosphate (PRPP) to UMP and diphosphate. The protein is Uracil phosphoribosyltransferase of Mycobacterium bovis (strain ATCC BAA-935 / AF2122/97).